Here is a 412-residue protein sequence, read N- to C-terminus: Gamma-glutamyl phosphate reductase (412 aa).

The protein belongs to the gamma-glutamyl phosphate reductase family.

It localises to the cytoplasm. It carries out the reaction L-glutamate 5-semialdehyde + phosphate + NADP(+) = L-glutamyl 5-phosphate + NADPH + H(+). It functions in the pathway amino-acid biosynthesis; L-proline biosynthesis; L-glutamate 5-semialdehyde from L-glutamate: step 2/2. Catalyzes the NADPH-dependent reduction of L-glutamate 5-phosphate into L-glutamate 5-semialdehyde and phosphate. The product spontaneously undergoes cyclization to form 1-pyrroline-5-carboxylate. In Bartonella bacilliformis (strain ATCC 35685 / KC583 / Herrer 020/F12,63), this protein is Gamma-glutamyl phosphate reductase.